The sequence spans 516 residues: Solute carrier family 49 member A3 (516 aa).

A compositionally biased stretch (basic and acidic residues) spans 1 to 10 (MAGTMDRLED). The segment at 1–22 (MAGTMDRLEDCNSPETSGTAGD) is disordered. Helical transmembrane passes span 34–54 (WVFL…WLSF), 74–94 (WLSL…IWVL), 104–124 (ILGA…CLPV), 139–159 (LCAL…ALWF), 170–190 (ISTM…PALV), 199–219 (MLGI…VCLW), 253–273 (VLLA…SALL), 289–309 (LCGA…GLYV), 321–341 (IGLC…QLQG), 344–364 (LALA…APVV), 382–402 (GLIF…LTAL), and 425–445 (VSLL…VIFF). A disordered region spans residues 453-516 (EAESGGSSSP…EWAETMPRDV (64 aa)). The span at 504–516 (GHSEWAETMPRDV) shows a compositional bias: basic and acidic residues.

The protein belongs to the major facilitator superfamily.

Its subcellular location is the membrane. The chain is Solute carrier family 49 member A3 (Slc49a3) from Mus musculus (Mouse).